The sequence spans 117 residues: Large ribosomal subunit protein bL17 (117 aa).

This sequence belongs to the bacterial ribosomal protein bL17 family. As to quaternary structure, part of the 50S ribosomal subunit. Contacts protein L32.

The sequence is that of Large ribosomal subunit protein bL17 from Dehalococcoides mccartyi (strain ATCC BAA-2100 / JCM 16839 / KCTC 5957 / BAV1).